The chain runs to 424 residues: Protein arginine N-methyltransferase 2 (424 aa).

Disordered regions lie at residues 67 to 89 (DEAQTETNGVNGETSSASTEQKS) and 151 to 212 (YEPL…SSRY). Polar residues predominate over residues 71–89 (TETNGVNGETSSASTEQKS). 2 stretches are compositionally biased toward low complexity: residues 163–173 (TGQGEDAANEP) and 187–201 (ETTAADASAAEASTE). An RMT2 domain is found at 205-424 (PDVTSSRYLD…YRLPLCKFMD (220 aa)). S-adenosyl-L-methionine contacts are provided by residues Tyr-212, Met-241, 261–266 (HGMGIV), 282–284 (EAH), 309–310 (WQ), and Asp-329.

Belongs to the class I-like SAM-binding methyltransferase superfamily. RMT2 methyltransferase family. In terms of assembly, monomer.

It is found in the cytoplasm. It localises to the nucleus. S-adenosyl-L-methionine-dependent protein-arginine N-methyltransferase that methylates the delta-nitrogen atom of arginine residues to form N5-methylarginine (type IV) in target proteins. Monomethylates ribosomal protein L12. In Aspergillus fumigatus (strain ATCC MYA-4609 / CBS 101355 / FGSC A1100 / Af293) (Neosartorya fumigata), this protein is Protein arginine N-methyltransferase 2.